The primary structure comprises 340 residues: Tryptophan--tRNA ligase (340 aa).

ATP-binding positions include 11–13 (RPT) and 19–20 (GH). Residues 12-20 (PTGKLHLGH) carry the 'HIGH' region motif. Position 140 (Asp140) interacts with L-tryptophan. Residues 152–154 (GND), Leu194, and 202–206 (KMSKS) contribute to the ATP site. The 'KMSKS' region motif lies at 202-206 (KMSKS).

This sequence belongs to the class-I aminoacyl-tRNA synthetase family. Homodimer.

It localises to the cytoplasm. The enzyme catalyses tRNA(Trp) + L-tryptophan + ATP = L-tryptophyl-tRNA(Trp) + AMP + diphosphate + H(+). Functionally, catalyzes the attachment of tryptophan to tRNA(Trp). This is Tryptophan--tRNA ligase from Streptococcus pyogenes serotype M3 (strain ATCC BAA-595 / MGAS315).